Consider the following 423-residue polypeptide: Protein SOSEKI 5 (423 aa).

The segment at 1–33 (MSSRVFRATPDNNYLVPRRSKDQQDTSPDRNRI) is disordered. Residues 19 to 33 (RSKDQQDTSPDRNRI) are compositionally biased toward basic and acidic residues. The segment at 45–136 (RKVPVVYYLC…YVLKGSEVLD (92 aa)) is DIX-like oligomerization domain. Disordered stretches follow at residues 150–172 (SSFR…PAVI) and 196–258 (SSAE…SPET). The segment covering 196–211 (SSAESTQRLAADASTQ) has biased composition (polar residues). Short sequence motifs (association to cell membranes) lie at residues 233–234 (AS) and 303–304 (CG). Positions 379-423 (SSSYNADRCSRMGPTTEKDEEEAVRAKCIPRKPKPVAKRNNGGQQ) are disordered. Residues 406-415 (CIPRKPKPVA) show a composition bias toward basic residues.

It belongs to the SOSEKI family. As to quaternary structure, homodimer. Forms long polymer filaments with other SOKs proteins polymers (e.g. SOK1, SOK2, SOK3 and SOK4) crucial for polar localization and biological activity. Binds to ANGUSTIFOLIA (AN). In terms of tissue distribution, expressed during embryogenesis and in roots.

The protein localises to the cell membrane. Functionally, SOSEKI proteins (SOK1-5) locally interpret global polarity cues and can influence cell division orientation to coordinate cell polarization relative to body axes. This chain is Protein SOSEKI 5, found in Arabidopsis thaliana (Mouse-ear cress).